The primary structure comprises 81 residues: Photosystem I iron-sulfur center (81 aa).

4Fe-4S ferredoxin-type domains follow at residues 2–31 and 39–68; these read SHSV…MIPW and IAPA…VRVY. The [4Fe-4S] cluster site is built by Cys11, Cys14, Cys17, Cys21, Cys48, Cys51, Cys54, and Cys58.

In terms of assembly, the eukaryotic PSI reaction center is composed of at least 11 subunits. [4Fe-4S] cluster serves as cofactor.

Its subcellular location is the plastid. The protein localises to the chloroplast thylakoid membrane. The enzyme catalyses reduced [plastocyanin] + hnu + oxidized [2Fe-2S]-[ferredoxin] = oxidized [plastocyanin] + reduced [2Fe-2S]-[ferredoxin]. Apoprotein for the two 4Fe-4S centers FA and FB of photosystem I (PSI); essential for photochemical activity. FB is the terminal electron acceptor of PSI, donating electrons to ferredoxin. The C-terminus interacts with PsaA/B/D and helps assemble the protein into the PSI complex. Required for binding of PsaD and PsaE to PSI. PSI is a plastocyanin-ferredoxin oxidoreductase, converting photonic excitation into a charge separation, which transfers an electron from the donor P700 chlorophyll pair to the spectroscopically characterized acceptors A0, A1, FX, FA and FB in turn. This is Photosystem I iron-sulfur center from Liriodendron tulipifera (Tuliptree).